A 240-amino-acid polypeptide reads, in one-letter code: Glutamine transport ATP-binding protein GlnQ (240 aa).

Residues 2-236 (IEFKNVSKHF…PPSQRLQEFL (235 aa)) form the ABC transporter domain. Residue 34–41 (GPSGSGKS) coordinates ATP.

The protein belongs to the ABC transporter superfamily. Heterotetramer with 2 subunits of GlnQ and 2 subunits of GlnP.

It localises to the cell inner membrane. Part of the binding-protein-dependent transport system for glutamine. Probably responsible for energy coupling to the transport system. The sequence is that of Glutamine transport ATP-binding protein GlnQ (glnQ) from Escherichia coli (strain K12).